The primary structure comprises 226 residues: Transmembrane gamma-carboxyglutamic acid protein 4 (226 aa).

Residues 1 to 17 form the signal peptide; sequence MFTLLVLLSQLPTVTLG. The propeptide occupies 18 to 49; that stretch reads FPHCARGPKASKHAGEEVFTSKEEANFFIHRR. Over 50–113 the chain is Extracellular; it reads LLYNRFDLEL…KSDGNREKID (64 aa). The 47-residue stretch at 52-98 folds into the Gla domain; that stretch reads YNRFDLELFTPGNLERECNEELCNYEEAREIFVDEDKTIAFWQEYSA. C69 and C74 are oxidised to a cystine. E72 carries the 4-carboxyglutamate modification. Residues 114–134 form a helical membrane-spanning segment; the sequence is VMGLLTGLIAAGVFLVIFGLL. At 135–226 the chain is on the cytoplasmic side; sequence GYYLCITKCN…FKKSMSLPSH (92 aa). At S163 the chain carries Phosphoserine. The LPXY motif; mediates binding to WW domain-containing proteins signature appears at 186–189; it reads LPSY. Residues 204-207 carry the PPXY motif; mediates binding to WW domain-containing proteins motif; the sequence is PPPY.

This sequence belongs to the commissureless family. Interacts (via cytoplasmic domain) with WW domain-containing proteins MAGI1, MAGI3, NEDD4, NEDD4L, WWTR1/TAZ and YAP1. In terms of processing, gamma-carboxyglutamate residues are formed by vitamin K dependent carboxylation. These residues are essential for the binding of calcium. Widely expressed with highest levels in kidney.

The protein localises to the endoplasmic reticulum-Golgi intermediate compartment membrane. It localises to the cell membrane. Functionally, may control axon guidance across the CNS. Prevents the delivery of ROBO1 at the cell surface and down-regulates its expression. In Homo sapiens (Human), this protein is Transmembrane gamma-carboxyglutamic acid protein 4.